Here is a 508-residue protein sequence, read N- to C-terminus: Photosystem II CP47 reaction center protein (508 aa).

The next 6 membrane-spanning stretches (helical) occupy residues 21–36 (SVHI…WAGS), 101–115 (IVFS…IWHW), 140–156 (GIHL…FGAF), 203–218 (IAAG…FHLS), 237–252 (VLSS…AFVV), and 457–472 (TFAL…HGAR).

It belongs to the PsbB/PsbC family. PsbB subfamily. PSII is composed of 1 copy each of membrane proteins PsbA, PsbB, PsbC, PsbD, PsbE, PsbF, PsbH, PsbI, PsbJ, PsbK, PsbL, PsbM, PsbT, PsbX, PsbY, PsbZ, Psb30/Ycf12, at least 3 peripheral proteins of the oxygen-evolving complex and a large number of cofactors. It forms dimeric complexes. Requires Binds multiple chlorophylls. PSII binds additional chlorophylls, carotenoids and specific lipids. as cofactor.

Its subcellular location is the plastid. It is found in the chloroplast thylakoid membrane. In terms of biological role, one of the components of the core complex of photosystem II (PSII). It binds chlorophyll and helps catalyze the primary light-induced photochemical processes of PSII. PSII is a light-driven water:plastoquinone oxidoreductase, using light energy to abstract electrons from H(2)O, generating O(2) and a proton gradient subsequently used for ATP formation. This is Photosystem II CP47 reaction center protein from Drimys granadensis.